The primary structure comprises 187 residues: Potassium-transporting ATPase KdpC subunit (187 aa).

A helical membrane pass occupies residues 10-30 (LVAATMLICVAGYSAAVWAVG).

Belongs to the KdpC family. The system is composed of three essential subunits: KdpA, KdpB and KdpC.

Its subcellular location is the cell inner membrane. Functionally, part of the high-affinity ATP-driven potassium transport (or Kdp) system, which catalyzes the hydrolysis of ATP coupled with the electrogenic transport of potassium into the cytoplasm. This subunit acts as a catalytic chaperone that increases the ATP-binding affinity of the ATP-hydrolyzing subunit KdpB by the formation of a transient KdpB/KdpC/ATP ternary complex. The sequence is that of Potassium-transporting ATPase KdpC subunit from Parvibaculum lavamentivorans (strain DS-1 / DSM 13023 / NCIMB 13966).